A 119-amino-acid polypeptide reads, in one-letter code: HTH-type transcriptional regulator SarX (119 aa).

Residues 55–78 constitute a DNA-binding region (H-T-H motif); the sequence is LKTAMDELDLSRTKLLVSIRRLIE.

Belongs to the SarA family.

The protein localises to the cytoplasm. In terms of biological role, involved in the regulation of virulence genes. Acts as a repressor of the agr locus and consequently targets genes regulated by the agr system such as sspA, hla and hlb. Binds directly to the agr promoter region. This chain is HTH-type transcriptional regulator SarX (sarX), found in Staphylococcus aureus (strain bovine RF122 / ET3-1).